Here is a 513-residue protein sequence, read N- to C-terminus: Transmembrane protein 151B (513 aa).

The disordered stretch occupies residues 1 to 29; the sequence is MSPAAPVTESSAAEVHREQTDAPREPQRP. Positions 14 to 28 are enriched in basic and acidic residues; sequence EVHREQTDAPREPQR. Helical transmembrane passes span 46 to 66, 93 to 113, and 274 to 294; these read CLLLSLLMYCCVIAMTWCQVT, YIYIPVAFLVMLYVVYLVECW, and LPWYASTCSFWLAAAFTLSWP. Residues Asn-366, Asn-418, and Asn-505 are each glycosylated (N-linked (GlcNAc...) asparagine).

The protein belongs to the TMEM151 family.

The protein resides in the membrane. The sequence is that of Transmembrane protein 151B (tmem151b) from Danio rerio (Zebrafish).